Reading from the N-terminus, the 274-residue chain is Energy-coupling factor transporter ATP-binding protein EcfA1 (274 aa).

Residues 9 to 240 enclose the ABC transporter domain; sequence CSFINVAFSY…EQELQKIRLD (232 aa). 41–48 contacts ATP; that stretch reads GHNGSGKS.

Belongs to the ABC transporter superfamily. Energy-coupling factor EcfA family. In terms of assembly, forms a stable energy-coupling factor (ECF) transporter complex composed of 2 membrane-embedded substrate-binding proteins (S component), 2 ATP-binding proteins (A component) and 2 transmembrane proteins (T component).

Its subcellular location is the cell membrane. Its function is as follows. ATP-binding (A) component of a common energy-coupling factor (ECF) ABC-transporter complex. Unlike classic ABC transporters this ECF transporter provides the energy necessary to transport a number of different substrates. The polypeptide is Energy-coupling factor transporter ATP-binding protein EcfA1 (Mycoplasma genitalium (strain ATCC 33530 / DSM 19775 / NCTC 10195 / G37) (Mycoplasmoides genitalium)).